We begin with the raw amino-acid sequence, 253 residues long: Triosephosphate isomerase (253 aa).

Substrate is bound at residue 8–10; that stretch reads NWK. The active-site Electrophile is His93. The active-site Proton acceptor is Glu165. Residues Gly171, Ser210, and 231-232 contribute to the substrate site; that span reads GG.

The protein belongs to the triosephosphate isomerase family. As to quaternary structure, homodimer.

The protein localises to the cytoplasm. It catalyses the reaction D-glyceraldehyde 3-phosphate = dihydroxyacetone phosphate. The protein operates within carbohydrate biosynthesis; gluconeogenesis. It functions in the pathway carbohydrate degradation; glycolysis; D-glyceraldehyde 3-phosphate from glycerone phosphate: step 1/1. Functionally, involved in the gluconeogenesis. Catalyzes stereospecifically the conversion of dihydroxyacetone phosphate (DHAP) to D-glyceraldehyde-3-phosphate (G3P). The chain is Triosephosphate isomerase from Francisella tularensis subsp. novicida (strain U112).